The primary structure comprises 57 residues: Temporin-ALk (57 aa).

An N-terminal signal peptide occupies residues 1–22 (MFTLKKSLLLLFFLGTINLSLC). Residues 23–46 (EQERNAEEERRDDLGERQAEVEKR) constitute a propeptide that is removed on maturation. Ser56 is subject to Serine amide.

The protein belongs to the frog skin active peptide (FSAP) family. Temporin subfamily. In terms of tissue distribution, expressed by the skin glands.

It is found in the secreted. Antimicrobial peptide with weak activity against Gram-positive and Gram-negative bacteria and against fungi. Has been tested against S.aureus (MIC=15.0 ug/mL), B.pumilus (no activity detected), B.cereus (no activity detected), E.coli (MIC=30.0 ug/mL), B.dysenteriae (MIC=60.0 ug/mL), A.cacoaceticus (MIC=75.0 ug/mL), P.aeruginosa (MIC=25.0 ug/mL) and C.albicans (MIC=15.0 ug/mL). Also shows a weak hemolytic activity. The chain is Temporin-ALk from Amolops loloensis (Lolokou Sucker Frog).